The sequence spans 489 residues: GTPase Der (489 aa).

2 consecutive EngA-type G domains span residues 30–199 (PVVS…KDKP) and 227–403 (FRLA…SRSH). GTP is bound by residues 36–43 (GRQNVGKS), 85–89 (DTPGL), 151–154 (NKAD), 233–240 (GKPNSGKS), 280–284 (DTAGI), and 345–348 (NKWD). The 85-residue stretch at 404-488 (RKVSTSELNK…PIRLEFRSDR (85 aa)) folds into the KH-like domain.

It belongs to the TRAFAC class TrmE-Era-EngA-EngB-Septin-like GTPase superfamily. EngA (Der) GTPase family. In terms of assembly, associates with the 50S ribosomal subunit.

Its function is as follows. GTPase that plays an essential role in the late steps of ribosome biogenesis. This is GTPase Der from Leptospira interrogans serogroup Icterohaemorrhagiae serovar Lai (strain 56601).